Reading from the N-terminus, the 812-residue chain is G patch domain-containing protein 1 homolog (812 aa).

The segment at 1–42 is disordered; the sequence is MNRKKLAAYGQEFEDDDEEGSSVSKKPTQIHEEIATDEKGKR. Basic and acidic residues predominate over residues 29 to 40; it reads QIHEEIATDEKG. Residues 145–191 form the G-patch domain; it reads SNSIGVRMLRSMGWREGRGIGLANVKQKQKRGGESSEAQFDREQASK. Disordered stretches follow at residues 384 to 416 and 584 to 812; these read ANEV…FPDE and NEIE…EEKK. A compositionally biased stretch (basic and acidic residues) spans 586–609; it reads IEMRERLLKSRAQRGAEEKKRNQS. Acidic residues-rich tracts occupy residues 610 to 630 and 653 to 668; these read DDDD…ENEA and DGAD…EEAE. The segment covering 669-720 has biased composition (basic and acidic residues); the sequence is EKERQEILKKREEDLKRRREIVEKKEEENRKRVEKELKELENRDLLRVSKQQ. Residues 761–794 are compositionally biased toward basic residues; that stretch reads MKKKKKDKKEKEKKKKSKKSKKSKKEKKTKRKHS. The span at 800-812 shows a compositional bias: acidic residues; that stretch reads DSGDNSDGWEEKK.

It belongs to the GPATCH1 family.

The polypeptide is G patch domain-containing protein 1 homolog (Caenorhabditis elegans).